The sequence spans 446 residues: Histidine--tRNA ligase (446 aa).

It belongs to the class-II aminoacyl-tRNA synthetase family. As to quaternary structure, homodimer.

Its subcellular location is the cytoplasm. The enzyme catalyses tRNA(His) + L-histidine + ATP = L-histidyl-tRNA(His) + AMP + diphosphate + H(+). This Paraburkholderia xenovorans (strain LB400) protein is Histidine--tRNA ligase.